A 1259-amino-acid chain; its full sequence is MDGPTRGHGLRKKRRSRSQRDRERRSRGGLGAGAAGGGGAGRTRALSLASSSGSDKEDNGKPPSSAPSRPRPPRRKRRESTSAEEDIIDGFAMTSFVTFEALEKDVALKPQERVEKRQTPLTKKKREALTNGLSFHSKKSRLSHPHHYSSDRENDRNLCQHLGKRKKMPKALRQLKPGQNSCRDSDSESASGESKGFHRSSSRERLSDSSAPSSLGTGYFCDSDSDQEEKASDASSEKLFNTVIVNKDPELGVGTLPEHDSQDAGPIVPKISGLERSQEKSQDCCKEPIFEPVVLKDPCPQVAQPIPQPQTEPQLRAPSPDPDLVQRTEAPPQPPPLSTQPPQGPPEAQLQPAPQPQVQRPPRPQSPTQLLHQNLPPVQAHPSAQSLSQPLSAYNSSSLSLNSLSSSRSSTPAKTQPAPPHISHHPSASPFPLSLPNHSPLHSFTPTLQPPAHSHHPNMFAPPTALPPPPPLTSGSLQVAGHPAGSTYSEQDILRQELNTRFLASQSADRGASLGPPPYLRTEFHQHQHQHQHTHQHTHQHTFTPFPHAIPPTAIMPTPAPPMFDKYPTKVDPFYRHSLFHSYPPAVSGIPPMIPPTGPFGSLQGAFQPKTSNPIDVAARPGTVPHTLLQKDPRLTDPFRPMLRKPGKWCAMHVHIAWQIYHHQQKVKKQMQSDPHKLDFGLKPEFLSRPPGPSLFGAIHHPHDLARPSTLFSAAGAAHPTGTPFGPPPHHSNFLNPAAHLEPFNRPSTFTGLAAVGGNAFGGLGNPSVTPNSMFGHKDGPSVQNFSNPHEPWNRLHRTPPSFPTPPPWLKPGELERSASAAAHDRDRDVDKRDSSVSKDDKERESVEKRHSSHPSPAPVLPVNALGHTRSSTEQIRAHLNTEAREKDKPKERERDHSESRKDLAADEHKAKEGHLPEKDGHGHEGRAAGEEAKQLARVPSPYVRTPVVESARPNSTSSREAEPRKGEPAYENPKKSSEVKVKEERKEDHDLPPEAPQTHRASEPPPPNSSSSVHPGPLASMPMTVGVTGIHPMNSISSLDRTRMMTPFMGISPLPGGERFPYPSFHWDPIRDPLRDPYRELDIHRRDPLGRDFLLRNDPLHRLSTPRLYEADRSFRDREPHDYSHHHHHHHHPLSVDPRREHERGGHLDERERLHMLREDYEHTRLHSVHPASLDGHLPHPSLITPGLPSMHYPRISPTAGNQNGLLNKTPPTAALSAPPPLISTLGGRPVSPRRTTPLSAEIRERPPSHTLKDIEAR.

Disordered stretches follow at residues 1-87 (MDGP…EEDI), 108-285 (LKPQ…QDCC), 299-470 (CPQV…PPPP), 771-1027 (PNSM…MTVG), and 1119-1146 (REPHDYSHHHHHHHHPLSVDPRREHERG). Residues 8 to 17 (HGLRKKRRSR) are compositionally biased toward basic residues. Positions 28-41 (GGLGAGAAGGGGAG) are enriched in gly residues. Basic and acidic residues predominate over residues 108–118 (LKPQERVEKRQ). Residues 136–147 (HSKKSRLSHPHH) are compositionally biased toward basic residues. Over residues 148 to 158 (YSSDRENDRNL) the composition is skewed to basic and acidic residues. Polar residues predominate over residues 177–192 (PGQNSCRDSDSESASG). A compositionally biased stretch (basic and acidic residues) spans 276-285 (RSQEKSQDCC). Positions 289–472 (IFEPVVLKDP…PTALPPPPPL (184 aa)) are important for regulation of lamellipodia formation. Composition is skewed to pro residues over residues 331-345 (PPQPPPLSTQPPQGP) and 353-365 (APQPQVQRPPRPQ). Low complexity predominate over residues 386–410 (SLSQPLSAYNSSSLSLNSLSSSRSS). Positions 436 to 447 (PNHSPLHSFTPT) are enriched in polar residues. Residues 801-810 (PSFPTPPPWL) show a composition bias toward pro residues. 3 stretches are compositionally biased toward basic and acidic residues: residues 813 to 850 (GELERSASAAAHDRDRDVDKRDSSVSKDDKERESVEKR), 876 to 935 (IRAH…EAKQ), and 960 to 993 (REAEPRKGEPAYENPKKSSEVKVKEERKEDHDLP). Positions 1125-1134 (SHHHHHHHHP) are enriched in basic residues. S1198 and S1233 each carry phosphoserine. A disordered region spans residues 1217 to 1259 (LSAPPPLISTLGGRPVSPRRTTPLSAEIRERPPSHTLKDIEAR). A compositionally biased stretch (basic and acidic residues) spans 1243–1259 (EIRERPPSHTLKDIEAR).

It belongs to the AUTS2 family. In terms of assembly, component of a PRC1-like complex that contains PCGF5, RNF2, CSNK2B, RYBP and AUTS2. Within this complex, interacts directly with PCGF5 and CSNK2B. Interacts with the histone acetyltransferase EP300/p300. Interacts (via Pro-rich region) with PREX1, DOCK1 and ELMO2. In terms of tissue distribution, strongly expressed in brain, skeletal muscle and kidney. Also expressed in placenta, lung and leukocytes.

Its subcellular location is the nucleus. It is found in the cytoplasm. The protein localises to the cytoskeleton. The protein resides in the cell projection. It localises to the growth cone. Functionally, component of a Polycomb group (PcG) multiprotein PRC1-like complex, a complex class required to maintain the transcriptionally repressive state of many genes, including Hox genes, throughout development. PcG PRC1 complex acts via chromatin remodeling and modification of histones; it mediates monoubiquitination of histone H2A 'Lys-119', rendering chromatin heritably changed in its expressibility. The PRC1-like complex that contains PCGF5, RNF2, CSNK2B, RYBP and AUTS2 has decreased histone H2A ubiquitination activity, due to the phosphorylation of RNF2 by CSNK2B. As a consequence, the complex mediates transcriptional activation. In the cytoplasm, plays a role in axon and dendrite elongation and in neuronal migration during embryonic brain development. Promotes reorganization of the actin cytoskeleton, lamellipodia formation and neurite elongation via its interaction with RAC guanine nucleotide exchange factors, which then leads to the activation of RAC1. The protein is Autism susceptibility gene 2 protein (AUTS2) of Homo sapiens (Human).